The chain runs to 435 residues: Enolase (435 aa).

Glutamine 163 provides a ligand contact to (2R)-2-phosphoglycerate. Glutamate 205 acts as the Proton donor in catalysis. Aspartate 243, glutamate 292, and aspartate 319 together coordinate Mg(2+). 4 residues coordinate (2R)-2-phosphoglycerate: lysine 344, arginine 373, serine 374, and lysine 395. The active-site Proton acceptor is the lysine 344.

It belongs to the enolase family. Mg(2+) is required as a cofactor.

It is found in the cytoplasm. The protein resides in the secreted. It localises to the cell surface. The enzyme catalyses (2R)-2-phosphoglycerate = phosphoenolpyruvate + H2O. It functions in the pathway carbohydrate degradation; glycolysis; pyruvate from D-glyceraldehyde 3-phosphate: step 4/5. Catalyzes the reversible conversion of 2-phosphoglycerate (2-PG) into phosphoenolpyruvate (PEP). It is essential for the degradation of carbohydrates via glycolysis. The polypeptide is Enolase (Streptococcus agalactiae serotype Ia (strain ATCC 27591 / A909 / CDC SS700)).